The sequence spans 157 residues: uncharacterized protein (157 aa).

Residues 9 to 154 (LLINYKTLDE…ETNSNAITNE (146 aa)) enclose the N-acetyltransferase domain.

This is an uncharacterized protein from Bacillus mycoides (strain KBAB4) (Bacillus weihenstephanensis).